The following is a 621-amino-acid chain: Intermediate filament protein ifc-2 (621 aa).

The interval 20-55 is head; it reads SGAYTSGFGGLVSGMSSAGAICTTQIRDAREREKRE. One can recognise an IF rod domain in the interval 52-400; it reads EKREIGLLND…VLLNGANVTT (349 aa). The interval 56-87 is coil 1A; the sequence is IGLLNDRLADYIEKVRFLEAQNQCLSHDIDIL. A linker 1 region spans residues 88-100; the sequence is RRGFSGGGHVSGL. The segment at 101-238 is coil 1B; sequence YDTEIAQAKR…TENSTRIEQE (138 aa). Residues 239 to 256 are linker 12; the sequence is LVFIRRDTTAENRDYFRH. A coil 2 region spans residues 257–400; the sequence is ELQAAIRDIR…VLLNGANVTT (144 aa). Positions 401–549 are tail; it reads YVSNTHPSGV…RVDVGGFRVE (149 aa). An LTD domain is found at 508–621; sequence SGRSFHSWYL…EERAWFVYLN (114 aa).

This sequence belongs to the intermediate filament family.

It is found in the cytoplasm. Cytoplasmic intermediate filaments provide mechanical strength to cells. This chain is Intermediate filament protein ifc-2, found in Caenorhabditis briggsae.